We begin with the raw amino-acid sequence, 747 residues long: Ion-translocating oxidoreductase complex subunit C (747 aa).

2 consecutive 4Fe-4S ferredoxin-type domains span residues methionine 368–tyrosine 397 and lysine 407–tyrosine 436. [4Fe-4S] cluster-binding residues include cysteine 377, cysteine 380, cysteine 383, cysteine 387, cysteine 416, cysteine 419, cysteine 422, and cysteine 426. Residues valine 538 to aspartate 564 form a disordered region.

Belongs to the 4Fe4S bacterial-type ferredoxin family. RnfC subfamily. As to quaternary structure, the complex is composed of six subunits: RnfA, RnfB, RnfC, RnfD, RnfE and RnfG. It depends on [4Fe-4S] cluster as a cofactor.

The protein localises to the cell inner membrane. In terms of biological role, part of a membrane-bound complex that couples electron transfer with translocation of ions across the membrane. The polypeptide is Ion-translocating oxidoreductase complex subunit C (Pectobacterium carotovorum subsp. carotovorum (strain PC1)).